The following is a 158-amino-acid chain: 2-C-methyl-D-erythritol 2,4-cyclodiphosphate synthase (158 aa).

Residues D8 and H10 each coordinate a divalent metal cation. 4-CDP-2-C-methyl-D-erythritol 2-phosphate contacts are provided by residues 8 to 10 and 34 to 35; these read DVH and HS. Position 42 (H42) interacts with a divalent metal cation. 4-CDP-2-C-methyl-D-erythritol 2-phosphate-binding positions include 56 to 58, 61 to 65, 100 to 106, 132 to 135, F139, and R142; these read DIG, FPDTD, AQVPKMA, and TTTE.

The protein belongs to the IspF family. As to quaternary structure, homotrimer. A divalent metal cation serves as cofactor.

It catalyses the reaction 4-CDP-2-C-methyl-D-erythritol 2-phosphate = 2-C-methyl-D-erythritol 2,4-cyclic diphosphate + CMP. It participates in isoprenoid biosynthesis; isopentenyl diphosphate biosynthesis via DXP pathway; isopentenyl diphosphate from 1-deoxy-D-xylulose 5-phosphate: step 4/6. In terms of biological role, involved in the biosynthesis of isopentenyl diphosphate (IPP) and dimethylallyl diphosphate (DMAPP), two major building blocks of isoprenoid compounds. Catalyzes the conversion of 4-diphosphocytidyl-2-C-methyl-D-erythritol 2-phosphate (CDP-ME2P) to 2-C-methyl-D-erythritol 2,4-cyclodiphosphate (ME-CPP) with a corresponding release of cytidine 5-monophosphate (CMP). The polypeptide is 2-C-methyl-D-erythritol 2,4-cyclodiphosphate synthase (Sodalis glossinidius (strain morsitans)).